The following is a 75-amino-acid chain: Holin (75 aa).

The next 2 membrane-spanning stretches (helical) occupy residues 16 to 36 and 39 to 59; these read FAQAMIGALGAGATGLIGVDW and ALSIAGFATVVSILTSLASGI.

As to quaternary structure, homomultimer.

The protein localises to the host cell inner membrane. In terms of biological role, accumulates harmlessly in the cytoplasmic membrane until it reaches a critical concentration that triggers the formation of micron-scale pores (holes) causing host cell membrane disruption and endolysin escape into the periplasmic space. Determines the precise timing of host cell lysis. Participates with the endolysin protein in the sequential events which lead to the programmed host cell lysis releasing the mature viral particles from the host cell. This chain is Holin, found in Lactococcus lactis subsp. cremoris (Streptococcus cremoris).